A 75-amino-acid polypeptide reads, in one-letter code: Cytochrome c oxidase assembly factor 5 (75 aa).

The region spanning 28-66 (QSDCVLQEGKSPKECLKEGYCKALQVTFFECKRSILDNR) is the CHCH domain. The short motif at 31–42 (CVLQEGKSPKEC) is the Cx10C motif element. Intrachain disulfides connect Cys-31/Cys-58 and Cys-42/Cys-48. The short motif at 48–58 (CKALQVTFFEC) is the Cx9C motif element.

Belongs to the PET191 family.

In terms of biological role, involved in an early step of the mitochondrial complex IV assembly process. The sequence is that of Cytochrome c oxidase assembly factor 5 (coa5) from Xenopus laevis (African clawed frog).